Reading from the N-terminus, the 261-residue chain is Cytochrome c oxidase subunit 3 (261 aa).

The Mitochondrial matrix segment spans residues 1–15; that stretch reads MTHQTHAYHMVNPSP. The chain crosses the membrane as a helical span at residues 16 to 34; it reads WPLTGALSALLMTSGLIMW. Over 35 to 40 the chain is Mitochondrial intermembrane; the sequence is FHFNSV. Residues 41–66 traverse the membrane as a helical segment; sequence ALLTLGLTTNMLTMYQWWRDVIREST. At 67 to 72 the chain is on the mitochondrial matrix side; that stretch reads FQGHHT. Residues 73–105 traverse the membrane as a helical segment; sequence PNVQKGLRYGMILFIISEVLFFTGFFWAFYHSS. Over 106–128 the chain is Mitochondrial intermembrane; sequence LAPTPELGGCWPPTGIHPLNPLE. A helical transmembrane segment spans residues 129–152; the sequence is VPLLNTSVLLASGVSITWAHHSLM. The Mitochondrial matrix segment spans residues 153–155; the sequence is EGN. Residues 156 to 183 traverse the membrane as a helical segment; it reads RNHMLQALFITIALGVYFTLLQASEYYE. The Mitochondrial intermembrane segment spans residues 184–190; that stretch reads APFTISD. The chain crosses the membrane as a helical span at residues 191–223; it reads GVYGSTFFVATGFHGLHVIIGSTFLIVCFFRQL. At 224 to 232 the chain is on the mitochondrial matrix side; sequence KFHFTSSHH. Residues 233 to 256 form a helical membrane-spanning segment; it reads FGFEAAAWYWHFVDVVWLFLYVSI. At 257–261 the chain is on the mitochondrial intermembrane side; that stretch reads YWWGS.

It belongs to the cytochrome c oxidase subunit 3 family. Component of the cytochrome c oxidase (complex IV, CIV), a multisubunit enzyme composed of 14 subunits. The complex is composed of a catalytic core of 3 subunits MT-CO1, MT-CO2 and MT-CO3, encoded in the mitochondrial DNA, and 11 supernumerary subunits COX4I, COX5A, COX5B, COX6A, COX6B, COX6C, COX7A, COX7B, COX7C, COX8 and NDUFA4, which are encoded in the nuclear genome. The complex exists as a monomer or a dimer and forms supercomplexes (SCs) in the inner mitochondrial membrane with NADH-ubiquinone oxidoreductase (complex I, CI) and ubiquinol-cytochrome c oxidoreductase (cytochrome b-c1 complex, complex III, CIII), resulting in different assemblies (supercomplex SCI(1)III(2)IV(1) and megacomplex MCI(2)III(2)IV(2)).

It localises to the mitochondrion inner membrane. The catalysed reaction is 4 Fe(II)-[cytochrome c] + O2 + 8 H(+)(in) = 4 Fe(III)-[cytochrome c] + 2 H2O + 4 H(+)(out). In terms of biological role, component of the cytochrome c oxidase, the last enzyme in the mitochondrial electron transport chain which drives oxidative phosphorylation. The respiratory chain contains 3 multisubunit complexes succinate dehydrogenase (complex II, CII), ubiquinol-cytochrome c oxidoreductase (cytochrome b-c1 complex, complex III, CIII) and cytochrome c oxidase (complex IV, CIV), that cooperate to transfer electrons derived from NADH and succinate to molecular oxygen, creating an electrochemical gradient over the inner membrane that drives transmembrane transport and the ATP synthase. Cytochrome c oxidase is the component of the respiratory chain that catalyzes the reduction of oxygen to water. Electrons originating from reduced cytochrome c in the intermembrane space (IMS) are transferred via the dinuclear copper A center (CU(A)) of subunit 2 and heme A of subunit 1 to the active site in subunit 1, a binuclear center (BNC) formed by heme A3 and copper B (CU(B)). The BNC reduces molecular oxygen to 2 water molecules using 4 electrons from cytochrome c in the IMS and 4 protons from the mitochondrial matrix. The polypeptide is Cytochrome c oxidase subunit 3 (MT-CO3) (Nanger dama (Dama gazelle)).